A 266-amino-acid chain; its full sequence is Glutamate racemase (266 aa).

Substrate contacts are provided by residues 9–10 and 41–42; these read DS and YG. C73 functions as the Proton donor/acceptor in the catalytic mechanism. 74–75 contacts substrate; it reads NS. C183 (proton donor/acceptor) is an active-site residue. Residue 184–185 coordinates substrate; the sequence is TH.

Belongs to the aspartate/glutamate racemases family.

The catalysed reaction is L-glutamate = D-glutamate. It functions in the pathway cell wall biogenesis; peptidoglycan biosynthesis. Its function is as follows. Provides the (R)-glutamate required for cell wall biosynthesis. This chain is Glutamate racemase, found in Shewanella halifaxensis (strain HAW-EB4).